The sequence spans 310 residues: M1-specific T cell receptor beta chain (310 aa).

The signal sequence occupies residues 1–21 (MSNQVLCCVVLCLLGANTVDG). The interval 22-114 (GITQSPKYLF…TAFYLCASSI (93 aa)) is t cell receptor beta variable 19. The Ig-like V-type domain occupies 34-131 (EGQNVTLSCE…FGPGTRLTVT (98 aa)). N-linked (GlcNAc...) asparagine glycosylation is present at Asn37. Residues Cys42 and Cys110 are joined by a disulfide bond. The interval 46–50 (LNHDA) is CDR1. Position 49 (Asp49) interacts with a peptide antigen. The tract at residues 68–73 (SQIVND) is CDR2. The interval 110 to 122 (CASSIRSSYEQYF) is CDR3. Positions 117 to 131 (SYEQYFGPGTRLTVT) are t cell receptor beta joining 2-7. A t cell receptor beta constant 2 region spans residues 133-310 (DLKNVFPPKV…AMVKRKDSRG (178 aa)). Positions 140–249 (PKVAVFEPSE…WTQDRAKPVT (110 aa)) constitute an Ig-like C1-type domain. A disulfide bond links Cys162 and Cys227. An N-linked (GlcNAc...) asparagine glycan is attached at Asn201. The segment at 262-276 (CGFTSESYQQGVLSA) is connecting peptide. The chain crosses the membrane as a helical span at residues 277–299 (TILYEILLGKATLYAVLVSALVL). Residues 300 to 310 (MAMVKRKDSRG) are Cytoplasmic-facing.

Disulfide-linked heterodimer with TRAV27*01J42*01C*01 alpha chain. The TR primarily interacts via its CDR3-beta domain with M/matrix protein 1-derived peptide (GILGFVFTL) displayed by HLA-A*02.01 in a 'peg-notch' recognition mode. The alpha-beta TR associates with the transmembrane signaling CD3 coreceptor proteins to form the TR-CD3 (TCR). The assembly of alpha-beta TR heterodimers with CD3 occurs in the endoplasmic reticulum where a single alpha-beta TR heterodimer associates with one CD3D-CD3E heterodimer, one CD3G-CD3E heterodimer and one CD247 homodimer forming a stable octameric structure. CD3D-CD3E and CD3G-CD3E heterodimers preferentially associate with TR alpha and TR beta chains (via TM domain), respectively. The association of the CD247 homodimer is the last step of TCR assembly in the endoplasmic reticulum and is required for transport to the cell surface. Expressed in M/matrix protein 1-specific effector memory CD8-positive T cells readily detectable in the peripheral blood, secondary lymphoid organs and lung (primary site of infection) of IAV infected individuals.

It localises to the cell membrane. Functionally, the beta chain of TRAV27*01J42*01C*01/TRBV19*01J2S7*01C*02 alpha-beta T cell receptor (TR) clonotype that is specific for HLA-A*02:01-restricted M/matrix protein 1 immunodominant epitope GILGFVFTL of influenza A virus (IAV). Classified as a public TCR clonotype, it is preferentially selected in effector memory CD8-positive T cells among multiple HLA-A*02:01 carriers/individuals and confers long-lived immunity against IAV infection. Can cross-recognize sporadically emerging IAV variants by molecular mimicry, inducing immunity toward different influenza strains. Antigen recognition initiates TR-CD3 clustering on the cell surface and intracellular activation of LCK that phosphorylates the ITAM motifs of CD3G, CD3D, CD3E and CD247 enabling the recruitment of ZAP70. In turn, ZAP70 phosphorylates LAT, which recruits numerous signaling molecules to form the LAT signalosome. The LAT signalosome propagates signal branching to three major signaling pathways, the calcium, the mitogen-activated protein kinase (MAPK) kinase and the nuclear factor NF-kappa-B (NF-kB) pathways, leading to the mobilization of transcription factors that are critical for gene expression and essential for T cell differentiation into effector/memory T cells. The protein is M1-specific T cell receptor beta chain of Homo sapiens (Human).